We begin with the raw amino-acid sequence, 247 residues long: E3 SUMO-protein ligase NSE2 (247 aa).

Methionine 1 bears the N-acetylmethionine mark. Residues lysine 90 and lysine 107 each participate in a glycyl lysine isopeptide (Lys-Gly) (interchain with G-Cter in SUMO2) cross-link. Serine 116 is modified (phosphoserine). Residues lysine 125 and lysine 130 each participate in a glycyl lysine isopeptide (Lys-Gly) (interchain with G-Cter in SUMO2) cross-link. The segment at 154–240 adopts an SP-RING-type zinc-finger fold; the sequence is MDEDMIVTQS…LRRAIESHNK (87 aa). Zn(2+)-binding residues include cysteine 185, histidine 187, cysteine 210, and cysteine 215.

Belongs to the NSE2 family. In terms of assembly, component of the SMC5-SMC6 complex which consists at least of SMC5, SMC6, NSMCE2, NSMCE1, NSMCE4A or EID3 and NSMCE3. Post-translationally, sumoylated, possibly via autosumoylation.

The protein resides in the nucleus. It is found in the chromosome. It localises to the telomere. Its subcellular location is the PML body. Its pathway is protein modification; protein sumoylation. E3 SUMO-protein ligase component of the SMC5-SMC6 complex, a complex involved in DNA double-strand break repair by homologous recombination. Is not be required for the stability of the complex. The complex may promote sister chromatid homologous recombination by recruiting the SMC1-SMC3 cohesin complex to double-strand breaks. Acts as an E3 ligase mediating SUMO attachment to various proteins such as SMC6L1 and TSNAX, the shelterin complex subunits TERF1, TERF2, TINF2 and TERF2IP, RAD51AP1, and maybe the cohesin components RAD21 and STAG2. Required for recruitment of telomeres to PML nuclear bodies. Required for sister chromatid cohesion during prometaphase and mitotic progression. This Rattus norvegicus (Rat) protein is E3 SUMO-protein ligase NSE2 (Nsmce2).